Here is a 404-residue protein sequence, read N- to C-terminus: Transcriptional repressor OPI1 (404 aa).

Ser10 carries the post-translational modification Phosphoserine. Positions 25–51 (QSCRQKSQPSEDVSQADKMPASESSTT) are disordered. The span at 26-37 (SCRQKSQPSEDV) shows a compositional bias: polar residues. The tract at residues 109-138 (KRQKLSRAIAKGKDNLKEYKLNMSIESKKR) is basic motif. The tract at residues 139 to 160 (LVTCLHLLKLANKQLSDKISCL) is leucine-zipper. Disordered stretches follow at residues 170–201 (HPLHKQDGNARTTTGAGEDETSSDEDDDDEEF), 305–327 (LQQQQQKRNKDGDDSASPSSSVT), and 378–404 (QQQQYRQQQQKDGNYVKPSQDNVDSKD). The span at 186–201 (GEDETSSDEDDDDEEF) shows a compositional bias: acidic residues. The FFAT signature appears at 200-206 (EFFDASE). Residues 378-387 (QQQQYRQQQQ) show a composition bias toward low complexity. Polar residues predominate over residues 394–404 (KPSQDNVDSKD).

In terms of assembly, interacts with SCS2.

It localises to the endoplasmic reticulum. It is found in the nucleus. Negative regulator of the transcriptional complex INO2-INO4 in response to phospholipid precursor availability. When precursors become limiting, OPI1 is retained at the endoplasmic reticulum (ER) and INO2-INO4 activates INO1 and other genes required for phospholipid biosynthesis, whereas abundant precursor availability results in targeting of OPI1 to the nucleus to repress transcription of these genes. Binds directly to phosphatidic acid, which is required for ER targeting and may act as sensing mechanism for precursor availability, as phosphatidic acid becomes rapidly depleted upon phospholipid biosynthesis. The chain is Transcriptional repressor OPI1 (OPI1) from Saccharomyces cerevisiae (strain ATCC 204508 / S288c) (Baker's yeast).